The following is a 245-amino-acid chain: Probable transcriptional regulatory protein TP_0474 (245 aa).

Belongs to the TACO1 family.

It is found in the cytoplasm. The sequence is that of Probable transcriptional regulatory protein TP_0474 from Treponema pallidum (strain Nichols).